We begin with the raw amino-acid sequence, 513 residues long: ATP synthase subunit alpha (513 aa).

169–176 is an ATP binding site; that stretch reads GDRQTGKT.

The protein belongs to the ATPase alpha/beta chains family. As to quaternary structure, F-type ATPases have 2 components, CF(1) - the catalytic core - and CF(0) - the membrane proton channel. CF(1) has five subunits: alpha(3), beta(3), gamma(1), delta(1), epsilon(1). CF(0) has three main subunits: a(1), b(2) and c(9-12). The alpha and beta chains form an alternating ring which encloses part of the gamma chain. CF(1) is attached to CF(0) by a central stalk formed by the gamma and epsilon chains, while a peripheral stalk is formed by the delta and b chains.

The protein resides in the cell inner membrane. The enzyme catalyses ATP + H2O + 4 H(+)(in) = ADP + phosphate + 5 H(+)(out). Its function is as follows. Produces ATP from ADP in the presence of a proton gradient across the membrane. The alpha chain is a regulatory subunit. In Hydrogenovibrio crunogenus (strain DSM 25203 / XCL-2) (Thiomicrospira crunogena), this protein is ATP synthase subunit alpha.